The following is a 253-amino-acid chain: Ribosomal RNA small subunit methyltransferase G (253 aa).

Residues Gly-84, Phe-89, 135-136 (AE), and Arg-154 each bind S-adenosyl-L-methionine. The segment at 228–253 (TPAKYPRREGVPTHQPLFWKAKEQSR) is disordered.

Belongs to the methyltransferase superfamily. RNA methyltransferase RsmG family.

It localises to the cytoplasm. Functionally, specifically methylates the N7 position of a guanine in 16S rRNA. This Deinococcus radiodurans (strain ATCC 13939 / DSM 20539 / JCM 16871 / CCUG 27074 / LMG 4051 / NBRC 15346 / NCIMB 9279 / VKM B-1422 / R1) protein is Ribosomal RNA small subunit methyltransferase G.